A 64-amino-acid polypeptide reads, in one-letter code: uncharacterized protein (64 aa).

The helical transmembrane segment at 33–55 (YTPLGSYMIFGIVHYFCSYHIGI) threads the bilayer.

It localises to the membrane. This is an uncharacterized protein from Saccharomyces cerevisiae (strain ATCC 204508 / S288c) (Baker's yeast).